Reading from the N-terminus, the 444-residue chain is Methylenetetrahydrofolate--tRNA-(uracil-5-)-methyltransferase TrmFO (444 aa).

Residue 10-15 (GAGLAG) coordinates FAD.

The protein belongs to the MnmG family. TrmFO subfamily. FAD is required as a cofactor.

The protein localises to the cytoplasm. The enzyme catalyses uridine(54) in tRNA + (6R)-5,10-methylene-5,6,7,8-tetrahydrofolate + NADH + H(+) = 5-methyluridine(54) in tRNA + (6S)-5,6,7,8-tetrahydrofolate + NAD(+). The catalysed reaction is uridine(54) in tRNA + (6R)-5,10-methylene-5,6,7,8-tetrahydrofolate + NADPH + H(+) = 5-methyluridine(54) in tRNA + (6S)-5,6,7,8-tetrahydrofolate + NADP(+). Its function is as follows. Catalyzes the folate-dependent formation of 5-methyl-uridine at position 54 (M-5-U54) in all tRNAs. The protein is Methylenetetrahydrofolate--tRNA-(uracil-5-)-methyltransferase TrmFO of Streptococcus pneumoniae (strain Taiwan19F-14).